Here is a 353-residue protein sequence, read N- to C-terminus: Protein MGF 360-13L (353 aa).

The protein belongs to the asfivirus MGF 360 family.

Functionally, plays a role in virus cell tropism, and may be required for efficient virus replication in macrophages. This chain is Protein MGF 360-13L, found in African swine fever virus (isolate Tick/Malawi/Lil 20-1/1983) (ASFV).